Reading from the N-terminus, the 2422-residue chain is Interferon-induced very large GTPase 1 (2422 aa).

The tract at residues 945-965 is disordered; that stretch reads ENFFEDSDSPTKSSSTEPSPH. A compositionally biased stretch (low complexity) spans 954-963; that stretch reads PTKSSSTEPS. Positions 1479 to 1720 constitute a VLIG-type G domain; sequence DKRLFVLSIL…KISDVKSRVQ (242 aa). Residues 1489–1496, 1542–1545, and 1619–1622 contribute to the GTP site; these read GLQSSGKS, DTEG, and TATD.

The protein belongs to the TRAFAC class dynamin-like GTPase superfamily. Very large inducible GTPase (VLIG) family.

The protein localises to the cytoplasm. The protein resides in the cytosol. Its subcellular location is the nucleus. The polypeptide is Interferon-induced very large GTPase 1 (GVINP1) (Homo sapiens (Human)).